The chain runs to 553 residues: CTP synthase (553 aa).

An amidoligase domain region spans residues 1 to 270 (MTKYVFVTGG…DRLICEELRL (270 aa)). Ser13 provides a ligand contact to CTP. Ser13 serves as a coordination point for UTP. ATP contacts are provided by residues 14-19 (SLGKGI) and Asp71. Residues Asp71 and Glu144 each coordinate Mg(2+). Residues 151-153 (DIE), 191-196 (KTKPTQ), and Lys227 each bind CTP. UTP contacts are provided by residues 191 to 196 (KTKPTQ) and Lys227. Residues 295 to 547 (TIGMVGKYVD…VQAALACQQT (253 aa)) form the Glutamine amidotransferase type-1 domain. Residue Gly356 participates in L-glutamine binding. The active-site Nucleophile; for glutamine hydrolysis is Cys383. L-glutamine-binding positions include 384-387 (LGMQ), Glu407, and Arg473. Active-site residues include His520 and Glu522.

It belongs to the CTP synthase family. In terms of assembly, homotetramer.

The enzyme catalyses UTP + L-glutamine + ATP + H2O = CTP + L-glutamate + ADP + phosphate + 2 H(+). It carries out the reaction L-glutamine + H2O = L-glutamate + NH4(+). The catalysed reaction is UTP + NH4(+) + ATP = CTP + ADP + phosphate + 2 H(+). The protein operates within pyrimidine metabolism; CTP biosynthesis via de novo pathway; CTP from UDP: step 2/2. With respect to regulation, allosterically activated by GTP, when glutamine is the substrate; GTP has no effect on the reaction when ammonia is the substrate. The allosteric effector GTP functions by stabilizing the protein conformation that binds the tetrahedral intermediate(s) formed during glutamine hydrolysis. Inhibited by the product CTP, via allosteric rather than competitive inhibition. Catalyzes the ATP-dependent amination of UTP to CTP with either L-glutamine or ammonia as the source of nitrogen. Regulates intracellular CTP levels through interactions with the four ribonucleotide triphosphates. This is CTP synthase from Burkholderia mallei (strain NCTC 10229).